Here is a 262-residue protein sequence, read N- to C-terminus: ATP synthase subunit a (262 aa).

The next 5 helical transmembrane spans lie at 25–45, 86–106, 130–150, 204–226, and 240–260; these read NVHIDTLFFSVLAAIIFLAVF, VAPLALTIFCWVFIMNAIDLI, DISATLGMSLCVFALILFYTV, LIFILIAVMYSANAAIAALGIPL, and LQAFIFMMLTVVYLSIAYNKA.

It belongs to the ATPase A chain family. F-type ATPases have 2 components, CF(1) - the catalytic core - and CF(0) - the membrane proton channel. CF(1) has five subunits: alpha(3), beta(3), gamma(1), delta(1), epsilon(1). CF(0) has three main subunits: a(1), b(2) and c(9-12). The alpha and beta chains form an alternating ring which encloses part of the gamma chain. CF(1) is attached to CF(0) by a central stalk formed by the gamma and epsilon chains, while a peripheral stalk is formed by the delta and b chains.

It is found in the cell inner membrane. Its function is as follows. Key component of the proton channel; it plays a direct role in the translocation of protons across the membrane. The protein is ATP synthase subunit a of Mannheimia succiniciproducens (strain KCTC 0769BP / MBEL55E).